The sequence spans 87 residues: Small ribosomal subunit protein uS19m (87 aa).

Belongs to the universal ribosomal protein uS19 family.

The protein localises to the mitochondrion. This chain is Small ribosomal subunit protein uS19m (mrps19), found in Dictyostelium citrinum (Slime mold).